Consider the following 182-residue polypeptide: Small ribosomal subunit protein uS9 (182 aa).

It belongs to the universal ribosomal protein uS9 family.

This is Small ribosomal subunit protein uS9 from Corynebacterium efficiens (strain DSM 44549 / YS-314 / AJ 12310 / JCM 11189 / NBRC 100395).